Reading from the N-terminus, the 559-residue chain is Glycerol kinase (559 aa).

ADP is bound at residue Thr20. 3 residues coordinate ATP: Thr20, Ser21, and Ser22. Thr20 provides a ligand contact to sn-glycerol 3-phosphate. ADP is bound at residue Arg24. Residues Arg94, Glu95, and Tyr148 each coordinate sn-glycerol 3-phosphate. Arg94, Glu95, and Tyr148 together coordinate glycerol. Position 252 (Gly252) interacts with beta-D-fructose 1,6-bisphosphate. Asp265 is a sn-glycerol 3-phosphate binding site. 2 residues coordinate glycerol: Asp265 and Gln266. Residues Thr287, Gly332, Gly433, and Asn437 each contribute to the ADP site. 3 residues coordinate ATP: Thr287, Gly332, and Gly433. Residue Glu501 coordinates Zn(2+). Residues 532–552 form a helical membrane-spanning segment; sequence IFCSLPLGFFIVSSVVMLIGA.

This sequence belongs to the FGGY kinase family.

The protein localises to the mitochondrion outer membrane. Its subcellular location is the nucleus. The protein resides in the cytoplasm. It localises to the cytosol. It carries out the reaction glycerol + ATP = sn-glycerol 3-phosphate + ADP + H(+). The protein operates within polyol metabolism; glycerol degradation via glycerol kinase pathway; sn-glycerol 3-phosphate from glycerol: step 1/1. Its function is as follows. Kinase that plays a key role in glycerol metabolism, catalyzing its phosphorylation to produce sn-glycerol 3-phosphate. Sn-glycerol 3-phosphate is a crucial intermediate in various metabolic pathways, such as the synthesis of glycerolipids and triglycerides, glycogenesis, glycolysis and gluconeogenesis. The protein is Glycerol kinase of Bos taurus (Bovine).